The following is a 261-amino-acid chain: SLA class II histocompatibility antigen, DQ haplotype C beta chain (261 aa).

An N-terminal signal peptide occupies residues 1–31 (MSGMVALRLPRGLWTAALTVMLVVLGAPVAE). The interval 32–126 (GRDSPQDFVF…IEEGTTLQRR (95 aa)) is beta-1. Topologically, residues 32–230 (GRDSPQDFVF…RAQSESAQSK (199 aa)) are extracellular. 2 disulfides stabilise this stretch: C47/C111 and C149/C205. N-linked (GlcNAc...) asparagine glycosylation occurs at N51. Residues 127 to 220 (VQPTVTISPS…SLQNPILVEW (94 aa)) are beta-2. The 105-residue stretch at 129 to 233 (PTVTISPSKA…SESAQSKMLS (105 aa)) folds into the Ig-like C1-type domain. Residues 221–230 (RAQSESAQSK) are connecting peptide. Residues 231-251 (MLSGVGGFVLGLIFLGLGLFI) form a helical membrane-spanning segment. Topologically, residues 252-261 (RHRSQKGLVR) are cytoplasmic.

The protein belongs to the MHC class II family.

Its subcellular location is the membrane. The sequence is that of SLA class II histocompatibility antigen, DQ haplotype C beta chain from Sus scrofa (Pig).